The primary structure comprises 306 residues: Ornithine carbamoyltransferase (306 aa).

Residues 53–56 (STRT), Gln80, Arg104, and 131–134 (HPCQ) each bind carbamoyl phosphate. Residues Asn162, Asp220, and 224 to 225 (SM) each bind L-ornithine. Residues 260 to 261 (CL) and Arg288 each bind carbamoyl phosphate.

It belongs to the aspartate/ornithine carbamoyltransferase superfamily. OTCase family.

The protein resides in the cytoplasm. The catalysed reaction is carbamoyl phosphate + L-ornithine = L-citrulline + phosphate + H(+). It functions in the pathway amino-acid biosynthesis; L-arginine biosynthesis; L-arginine from L-ornithine and carbamoyl phosphate: step 1/3. Reversibly catalyzes the transfer of the carbamoyl group from carbamoyl phosphate (CP) to the N(epsilon) atom of ornithine (ORN) to produce L-citrulline. This is Ornithine carbamoyltransferase from Dechloromonas aromatica (strain RCB).